Reading from the N-terminus, the 513-residue chain is MSYTQAFLRNFLGTSPNWYKITIVLFLIINPIIFFFISPFIAGWLLVAEFILTLAMALKCYPLQPGGLLALEAVAIGMTHPEHVKAEIIANFEVILLLIFMVAGIYFMKRLLLFVFTKLLLSIRSKMVLSLAFCLSAAFLSAFLDALTVVAVIISVGMGFYGVYHKVASGNNFNDSTDITKDDKIGENKDTLEQFRAFLRSLMMHSCVGTALGGVMTMVGEPQNLIIAEQAKWAFGEFFLRMLPVTLPVLICGLVTCFLVEKFGVFGYGAKLPRKVWGILAKFDRNNQQKMSQQDRLKLFVQALIGIWLVVGLAFHLAAVGIIGLTVIILATSFCGVTSEHAIGKAFQESLPFTALLVVFFSVVAVIIDQHLFAPIIQFVLAASEHTQLALFYIFNGLLSAISDNVFVATVYINETKAALEAGLIAQPQYELLAVAINTGTNLPSVATPNGQAAFLFLLTSSLAPLIRLSYGRMVYMALPYTIVLSCIGLLAVEYILPGATNVLIQIGLLKPM.

The next 11 membrane-spanning stretches (helical) occupy residues 21–41, 88–108, 119–139, 143–163, 208–228, 247–267, 303–323, 357–377, 389–409, 447–467, and 477–497; these read ITIV…SPFI, IIAN…IYFM, LLLS…SAAF, FLDA…FYGV, VGTA…LIIA, LPVL…GVFG, ALIG…VGII, LVVF…APII, LALF…VFVA, ATPN…APLI, and MALP…EYIL.

This sequence belongs to the NhaB Na(+)/H(+) (TC 2.A.34) antiporter family.

It is found in the cell inner membrane. The enzyme catalyses 2 Na(+)(in) + 3 H(+)(out) = 2 Na(+)(out) + 3 H(+)(in). Its function is as follows. Na(+)/H(+) antiporter that extrudes sodium in exchange for external protons. The polypeptide is Na(+)/H(+) antiporter NhaB (Pasteurella multocida (strain Pm70)).